Consider the following 420-residue polypeptide: UDP-glucuronic acid decarboxylase 1 (420 aa).

M1 is modified (N-acetylmethionine). The Cytoplasmic portion of the chain corresponds to 1–19 (MVSKGLLRLVSSVNRRKMK). The chain crosses the membrane as a helical; Signal-anchor for type II membrane protein span at residues 20–40 (LLLGIALFAYAASVWGNFVNM). Residues 41–420 (RSIQENGELK…RVKKGRTRHS (380 aa)) lie on the Lumenal side of the membrane. T94 bears the Phosphothreonine mark. 10 residues coordinate NAD(+): G98, F99, V100, D119, N120, F122, T123, G124, D144, and V145. L149 and Y150 together coordinate UDP-alpha-D-glucuronate. Residues L159 and S161 each coordinate NAD(+). Residue K177 coordinates UDP-alpha-D-glucuronate. An NAD(+)-binding site is contributed by T178. UDP-alpha-D-glucuronate is bound by residues N185, G188, K191, and R192. NAD(+) is bound by residues A200, Y231, and K235. The active-site Proton acceptor is the Y231. Y245, Q248, and E249 together coordinate UDP-alpha-D-glucuronate. The NAD(+) site is built by T261, H267, and R272. N-linked (GlcNAc...) asparagine glycosylation occurs at N316.

This sequence belongs to the NAD(P)-dependent epimerase/dehydratase family. UDP-glucuronic acid decarboxylase subfamily. In terms of assembly, homodimer and homotetramer. Interacts with AKT1. The cofactor is NAD(+). In terms of tissue distribution, ubiquitous. Detected in heart, brain, spleen, lung, testis, liver, skeletal muscle and kidney.

The protein resides in the golgi apparatus. The protein localises to the golgi stack membrane. The catalysed reaction is UDP-alpha-D-glucuronate + H(+) = UDP-alpha-D-xylose + CO2. The protein operates within nucleotide-sugar biosynthesis; UDP-alpha-D-xylose biosynthesis; UDP-alpha-D-xylose from UDP-alpha-D-glucuronate: step 1/1. Its function is as follows. Catalyzes the NAD-dependent decarboxylation of UDP-glucuronic acid to UDP-xylose. Necessary for the biosynthesis of the core tetrasaccharide in glycosaminoglycan biosynthesis. This Rattus norvegicus (Rat) protein is UDP-glucuronic acid decarboxylase 1.